A 288-amino-acid polypeptide reads, in one-letter code: MAVIYWDRSKIVWSFEPWSLRLTWYGVFFTVGIFLACLSARYLALSYYGLKDHLSFSKSQLRVALENFFIYSILFIVPGARLAYVIFYGWSFYLQHPEEIIQIWHGGLSSHGGVLGFLLWAAIFSWIYKKKISKLTFLFLTDLCGSVFGIAAFFIRLGNFWNQEIVGTPTSLPWGVVFSDPMQGVQGVPVHPVQLYEGISYLVVSGILYFLSYKRYLHLGKGYVTSIACISVAFIRFFAEYVKSHQGKVLAEDCLLTIGQILSIPLFLFGVALLIICSLKARRHRSHI.

4 helical membrane passes run 18-38 (WSLRLTWYGVFFTVGIFLACL), 68-88 (FFIYSILFIVPGARLAYVIFY), 107-127 (GLSSHGGVLGFLLWAAIFSWI), and 135-155 (LTFLFLTDLCGSVFGIAAFFI). R156 provides a ligand contact to a 1,2-diacyl-sn-glycero-3-phospho-(1'-sn-glycerol). The next 3 helical transmembrane spans lie at 193-213 (VQLYEGISYLVVSGILYFLSY), 222-242 (GYVTSIACISVAFIRFFAEYV), and 256-276 (LTIGQILSIPLFLFGVALLII).

The protein belongs to the Lgt family.

The protein localises to the cell inner membrane. It carries out the reaction L-cysteinyl-[prolipoprotein] + a 1,2-diacyl-sn-glycero-3-phospho-(1'-sn-glycerol) = an S-1,2-diacyl-sn-glyceryl-L-cysteinyl-[prolipoprotein] + sn-glycerol 1-phosphate + H(+). It participates in protein modification; lipoprotein biosynthesis (diacylglyceryl transfer). Its function is as follows. Catalyzes the transfer of the diacylglyceryl group from phosphatidylglycerol to the sulfhydryl group of the N-terminal cysteine of a prolipoprotein, the first step in the formation of mature lipoproteins. The protein is Phosphatidylglycerol--prolipoprotein diacylglyceryl transferase of Chlamydia pneumoniae (Chlamydophila pneumoniae).